A 177-amino-acid chain; its full sequence is MEVKMKILLDEDGIRRSITRISYEIIERNKTVDNIVLVGIKSRGDILAERIKQKLLEVENIDAPLETIDITYYRDDIDRKNFDLDIKDTEFKTNLTGKVVVIVDDVLYTGRTIRAGLDAILSKSRPAKIQLACLIDRGHRELPIRADFIGKNIPTSHSENIEVYLKELDGKEEVVIL.

Residues Ser-42–Arg-43, Asp-104–Thr-112, and Arg-137 each bind substrate. A PRPP-binding motif is present at residues Val-100–Thr-112.

Belongs to the purine/pyrimidine phosphoribosyltransferase family. PyrR subfamily.

It carries out the reaction UMP + diphosphate = 5-phospho-alpha-D-ribose 1-diphosphate + uracil. Functionally, regulates the transcription of the pyrimidine nucleotide (pyr) operon in response to exogenous pyrimidines. In terms of biological role, also displays a weak uracil phosphoribosyltransferase activity which is not physiologically significant. The sequence is that of Bifunctional protein PyrR from Fusobacterium nucleatum subsp. nucleatum (strain ATCC 25586 / DSM 15643 / BCRC 10681 / CIP 101130 / JCM 8532 / KCTC 2640 / LMG 13131 / VPI 4355).